The sequence spans 737 residues: MASRLLLLPRRRSRHGGASLLLARLLSSSSSEAGGGGAVEKVLVANRGEIACRVMRTARRLGIPTVAVYSDADRGALHVRAADEAVRLGPPPARESYLNASAIVDAALRTGAKAIHPGYGFLSESADFAQLCKAEGLTFIGPPPSAIRDMGDKSASKRIMGAAGVPLVPGYHGAEQDIELLKLEANKIGYPVLIKPTHGGGGKGMRIVQRPEDFVDSVLSAQREAAASFGINTLLVEKYITQPRHIEVQIFGDQHGNVIHLYERDCSLQRRHQKIIEEAPAPNVTAQFRSHIGEAAVSAAKAVGYYSAGTVEFIVDTLSGEFYFMEMNTRLQVEHPVTEMIVGQDLVEWQIRIANGECLPLSQEQVPLNGHAFEARIYAENVPRGFLPATGTLHHYRPVPSTATVRVETGVEEGDTVSMHYDPMIAKLVVWGESRNAALVKLKNSLSNFQIAGLPTNVGFLQELAGHSAFEKGLVDTHFIERYQNDLLSTSTQALSGSHEAEELGAILAAACICKKDHVSSEVSLHDKKLSMWYAHPPFRMHHFAKRLMEFELDRELGGSSDDLLKLSVTYRSDGTYFVETEDGSSPGLDVKVDSRGDHDFRVDVGGLQTDVTLAFYSKDNCNHIHIWHGKHHHHYRQTLRAEQSPDDSSQPSASSEARSHPKGSVLAPMAGLVVKVLLKDGARVEEGQPVMVMEAMKMEHVVKAPCAGYVEGLKATAGQQVFDSSVLFTVKENKPN.

A mitochondrion-targeting transit peptide spans 1 to 33 (MASRLLLLPRRRSRHGGASLLLARLLSSSSSEA). The region spanning 38–485 (AVEKVLVANR…DTHFIERYQN (448 aa)) is the Biotin carboxylation domain. ATP is bound by residues lysine 153, 185–246 (ANKI…PRHI), glutamate 237, and histidine 272. Positions 157–355 (KRIMGAAGVP…LVEWQIRIAN (199 aa)) constitute an ATP-grasp domain. Mn(2+) contacts are provided by glutamate 312, glutamate 326, and asparagine 328. Residue arginine 330 is part of the active site. The tract at residues 636–665 (YRQTLRAEQSPDDSSQPSASSEARSHPKGS) is disordered. Residues 647–657 (DDSSQPSASSE) are compositionally biased toward low complexity. One can recognise a Biotinyl-binding domain in the interval 656–732 (SEARSHPKGS…FDSSVLFTVK (77 aa)). The residue at position 698 (lysine 698) is an N6-biotinyllysine.

In terms of assembly, probably a heterodimer composed of biotin-containing alpha subunits and beta subunits. The cofactor is biotin. It depends on Mn(2+) as a cofactor.

The protein localises to the mitochondrion matrix. The catalysed reaction is 3-methylbut-2-enoyl-CoA + hydrogencarbonate + ATP = 3-methyl-(2E)-glutaconyl-CoA + ADP + phosphate + H(+). It functions in the pathway amino-acid degradation; L-leucine degradation; (S)-3-hydroxy-3-methylglutaryl-CoA from 3-isovaleryl-CoA: step 2/3. Its function is as follows. Biotin-attachment subunit of the 3-methylcrotonyl-CoA carboxylase, an enzyme that catalyzes the conversion of 3-methylcrotonyl-CoA to 3-methylglutaconyl-CoA, a critical step for leucine and isovaleric acid catabolism. This Oryza sativa subsp. japonica (Rice) protein is Methylcrotonoyl-CoA carboxylase subunit alpha, mitochondrial (MCCA).